Reading from the N-terminus, the 197-residue chain is Rac-like GTP-binding protein ARAC11 (197 aa).

13-20 (GDGAVGKT) is a binding site for GTP. The short motif at 35–43 (YVPTVFDNF) is the Effector region element. GTP contacts are provided by residues 60–64 (DTAGQ) and 118–121 (TKLD). Cysteine methyl ester is present on C194. C194 carries S-geranylgeranyl cysteine lipidation. Positions 195 to 197 (SIL) are cleaved as a propeptide — removed in mature form.

This sequence belongs to the small GTPase superfamily. Rho family. As to quaternary structure, part of a complex containing ROPGEF1 and PRK2. Interacts with UGT1, ICR1, ICR2, ICR3, ICR4 and ICR5. Interacts with PHIP1 when activated by GTP. Exclusively expressed in mature pollen and pollen tubes.

Its subcellular location is the cytoplasm. The protein resides in the membrane. It carries out the reaction GTP + H2O = GDP + phosphate + H(+). Its function is as follows. May be involved in cell polarity control during the actin-dependent tip growth of pollen tubes. May regulate callose synthase 1 (CALS1) activity through the interaction with UGT1. Functionally, inactive GDP-bound Rho GTPases reside in the cytosol, are found in a complex with Rho GDP-dissociation inhibitors (Rho GDIs), and are released from the GDI protein in order to translocate to membranes upon activation. This chain is Rac-like GTP-binding protein ARAC11, found in Arabidopsis thaliana (Mouse-ear cress).